The chain runs to 202 residues: Thymidylate kinase (202 aa).

7 to 14 contacts ATP; that stretch reads GIDGSGKT.

The protein belongs to the thymidylate kinase family.

It catalyses the reaction dTMP + ATP = dTDP + ADP. Its function is as follows. Phosphorylation of dTMP to form dTDP in both de novo and salvage pathways of dTTP synthesis. The polypeptide is Thymidylate kinase (Ehrlichia chaffeensis (strain ATCC CRL-10679 / Arkansas)).